The sequence spans 80 residues: Small ribosomal subunit protein bS16 (80 aa).

It belongs to the bacterial ribosomal protein bS16 family.

The polypeptide is Small ribosomal subunit protein bS16 (Acholeplasma laidlawii (strain PG-8A)).